We begin with the raw amino-acid sequence, 342 residues long: GTPase Obg (342 aa).

An Obg domain is found at 1–159; sequence MQFIDRAEIE…RNLRLELKLL (159 aa). The OBG-type G domain maps to 160–328; sequence AEVGIIGLPN…LLQAIWHRLD (169 aa). GTP contacts are provided by residues 166 to 173, 191 to 195, 213 to 216, 280 to 283, and 309 to 311; these read GLPNAGKS, FTTLV, DIPG, NKVD, and SAV. 2 residues coordinate Mg(2+): Ser-173 and Thr-193.

Belongs to the TRAFAC class OBG-HflX-like GTPase superfamily. OBG GTPase family. As to quaternary structure, monomer. The cofactor is Mg(2+).

It localises to the cytoplasm. In terms of biological role, an essential GTPase which binds GTP, GDP and possibly (p)ppGpp with moderate affinity, with high nucleotide exchange rates and a fairly low GTP hydrolysis rate. Plays a role in control of the cell cycle, stress response, ribosome biogenesis and in those bacteria that undergo differentiation, in morphogenesis control. This is GTPase Obg from Crocosphaera subtropica (strain ATCC 51142 / BH68) (Cyanothece sp. (strain ATCC 51142)).